A 226-amino-acid polypeptide reads, in one-letter code: UPF0758 protein SAK_1186 (226 aa).

In terms of domain architecture, MPN spans 103–225; it reads QILSSEQLAR…YYSFREEADI (123 aa). Histidine 174, histidine 176, and aspartate 187 together coordinate Zn(2+). The short motif at 174-187 is the JAMM motif element; sequence HNHPSGSPKPSESD.

Belongs to the UPF0758 family.

This chain is UPF0758 protein SAK_1186, found in Streptococcus agalactiae serotype Ia (strain ATCC 27591 / A909 / CDC SS700).